The sequence spans 438 residues: Glutamyl-tRNA reductase (438 aa).

Residues 49–52, Ser-109, 114–116, and Gln-120 contribute to the substrate site; these read TCNR and EGQ. Cys-50 (nucleophile) is an active-site residue. 197-202 contributes to the NADP(+) binding site; it reads GAGKMS.

Belongs to the glutamyl-tRNA reductase family. Homodimer.

It catalyses the reaction (S)-4-amino-5-oxopentanoate + tRNA(Glu) + NADP(+) = L-glutamyl-tRNA(Glu) + NADPH + H(+). It participates in porphyrin-containing compound metabolism; protoporphyrin-IX biosynthesis; 5-aminolevulinate from L-glutamyl-tRNA(Glu): step 1/2. Its pathway is porphyrin-containing compound metabolism; chlorophyll biosynthesis. Its function is as follows. Catalyzes the NADPH-dependent reduction of glutamyl-tRNA(Glu) to glutamate 1-semialdehyde (GSA). The protein is Glutamyl-tRNA reductase of Synechococcus elongatus (strain ATCC 33912 / PCC 7942 / FACHB-805) (Anacystis nidulans R2).